Consider the following 130-residue polypeptide: Histone H2A type 2 (130 aa).

The segment at 1-22 is disordered; the sequence is MSGRGKQGGKTRAKSKTRSSRA. The residue at position 2 (Ser2) is an N-acetylserine. At Ser2 the chain carries Phosphoserine. Lys6 is subject to N6-(2-hydroxyisobutyryl)lysine. Position 6 is an N6-acetyllysine (Lys6). The segment covering 7 to 19 has biased composition (basic residues); sequence QGGKTRAKSKTRS. Residue Lys10 is modified to N6-(2-hydroxyisobutyryl)lysine; alternate. The residue at position 10 (Lys10) is an N6-lactoyllysine; alternate. Lys10 carries the post-translational modification N6-succinyllysine. Glycyl lysine isopeptide (Lys-Gly) (interchain with G-Cter in ubiquitin) cross-links involve residues Lys14 and Lys16. At Lys37 the chain carries N6-(2-hydroxyisobutyryl)lysine; alternate. Position 76 is an N6-(2-hydroxyisobutyryl)lysine (Lys76). Lys96 carries the post-translational modification N6-(2-hydroxyisobutyryl)lysine; alternate. The residue at position 96 (Lys96) is an N6-succinyllysine. Lys96 is modified (N6-glutaryllysine; alternate). At Gln105 the chain carries N5-methylglutamine. The residue at position 119 (Lys119) is an N6-(2-hydroxyisobutyryl)lysine; alternate. Lys119 carries the post-translational modification N6-glutaryllysine; alternate. Residue Lys120 forms a Glycyl lysine isopeptide (Lys-Gly) (interchain with G-Cter in ubiquitin) linkage.

It belongs to the histone H2A family. As to quaternary structure, the nucleosome is a histone octamer containing two molecules each of H2A, H2B, H3 and H4 assembled in one H3-H4 heterotetramer and two H2A-H2B heterodimers. The octamer wraps approximately 147 bp of DNA. Monoubiquitination of Lys-120 (H2AK119Ub) gives a specific tag for epigenetic transcriptional repression. Following DNA double-strand breaks (DSBs), it is ubiquitinated through 'Lys-63' linkage of ubiquitin moieties, leading to the recruitment of repair proteins to sites of DNA damage. H2AK119Ub and ionizing radiation-induced 'Lys-63'-linked ubiquitination are distinct events. Post-translationally, phosphorylation on Ser-2 is enhanced during mitosis. Phosphorylation on Ser-2 directly represses transcription. In terms of processing, glutamine methylation at Gln-105 (H2AQ104me) by FBL is specifically dedicated to polymerase I. It is present at 35S ribosomal DNA locus and impairs binding of the FACT complex.

The protein resides in the nucleus. The protein localises to the chromosome. In terms of biological role, core component of nucleosome. Nucleosomes wrap and compact DNA into chromatin, limiting DNA accessibility to the cellular machineries which require DNA as a template. Histones thereby play a central role in transcription regulation, DNA repair, DNA replication and chromosomal stability. DNA accessibility is regulated via a complex set of post-translational modifications of histones, also called histone code, and nucleosome remodeling. In Xenopus laevis (African clawed frog), this protein is Histone H2A type 2.